A 613-amino-acid chain; its full sequence is Kelch-like protein 36 (613 aa).

The 68-residue stretch at 45 to 112 (CDVVLVVEEQ…LYSSELELDG (68 aa)) folds into the BTB domain. The BACK domain maps to 147-249 (YLYLQELASI…PEDILLQRVK (103 aa)). Kelch repeat units follow at residues 294–343 (CLLF…VLGG), 344–395 (FIFV…SIED), 396–442 (MLVA…IYKD), 444–491 (VYIS…SLGD), 492–544 (SIYS…VWQG), and 545–593 (RIYI…VCAL).

In terms of assembly, interacts with CUL3.

It functions in the pathway protein modification; protein ubiquitination. In terms of biological role, probable substrate-specific adapter of an E3 ubiquitin-protein ligase complex which mediates the ubiquitination and subsequent proteasomal degradation of target proteins. The polypeptide is Kelch-like protein 36 (Klhl36) (Rattus norvegicus (Rat)).